Reading from the N-terminus, the 279-residue chain is Phosphatidylglycerol--prolipoprotein diacylglyceryl transferase (279 aa).

The next 3 membrane-spanning stretches (helical) occupy residues 18-38, 55-75, and 89-109; these read LSVR…YFVA, IIFY…VIFQ, and IWHG…AGVI. Arginine 137 is an a 1,2-diacyl-sn-glycero-3-phospho-(1'-sn-glycerol) binding site. 2 consecutive transmembrane segments (helical) span residues 203–223 and 235–255; these read LGET…FIEG and IRVA…LIVY.

Belongs to the Lgt family.

Its subcellular location is the cell membrane. The enzyme catalyses L-cysteinyl-[prolipoprotein] + a 1,2-diacyl-sn-glycero-3-phospho-(1'-sn-glycerol) = an S-1,2-diacyl-sn-glyceryl-L-cysteinyl-[prolipoprotein] + sn-glycerol 1-phosphate + H(+). It participates in protein modification; lipoprotein biosynthesis (diacylglyceryl transfer). Catalyzes the transfer of the diacylglyceryl group from phosphatidylglycerol to the sulfhydryl group of the N-terminal cysteine of a prolipoprotein, the first step in the formation of mature lipoproteins. This Staphylococcus aureus (strain USA300) protein is Phosphatidylglycerol--prolipoprotein diacylglyceryl transferase.